Here is a 450-residue protein sequence, read N- to C-terminus: Sorting nexin-4 (450 aa).

M1 carries the N-acetylmethionine modification. Residues 1–53 (MEQAAPDPERLWQPAPLEPLSHPDAGLESMVGEETKGARDEGPGDGTMTENNF) form a disordered region. The segment covering 33-42 (EETKGARDEG) has biased composition (basic and acidic residues). In terms of domain architecture, PX spans 61 to 187 (SVSEAEKRTG…YLFLTQEGNW (127 aa)). 4 residues coordinate a 1,2-diacyl-sn-glycero-3-phospho-(1D-myo-inositol-3-phosphate): R106, S108, K132, and R154.

The protein belongs to the sorting nexin family. In terms of assembly, heterodimer; heterodimerizes with SNX7 or SNX30. Interacts with WWC1/KIBRA. Identified in a complex with WWC1/KIBRA and dynein components DYNLL1 and DYNC1I2. Interacts with BIN1.

It is found in the early endosome. Its subcellular location is the early endosome membrane. In terms of biological role, involved in the regulation of endocytosis and in several stages of intracellular trafficking. Plays a role in recycling endocytosed transferrin receptor and prevent its degradation. Involved in autophagosome assembly by regulating trafficking and recycling of phospholipid scramblase ATG9A. The sequence is that of Sorting nexin-4 from Bos taurus (Bovine).